Consider the following 868-residue polypeptide: Leucine--tRNA ligase (868 aa).

The 'HIGH' region motif lies at 42–52 (PYPSGKLHMGH). A 'KMSKS' region motif is present at residues 627–631 (KMSKS). ATP is bound at residue Lys-630.

This sequence belongs to the class-I aminoacyl-tRNA synthetase family.

The protein localises to the cytoplasm. The enzyme catalyses tRNA(Leu) + L-leucine + ATP = L-leucyl-tRNA(Leu) + AMP + diphosphate. The polypeptide is Leucine--tRNA ligase (Pseudomonas putida (strain ATCC 700007 / DSM 6899 / JCM 31910 / BCRC 17059 / LMG 24140 / F1)).